The chain runs to 172 residues: Gastrula zinc finger protein XlCGF51.1A (172 aa).

6 consecutive C2H2-type zinc fingers follow at residues 6–28, 34–56, 62–84, 90–112, 122–144, and 150–172; these read FSCS…NKIH, LICS…QRSH, FSCT…QRTH, FSCT…MLKH, LDCS…RKSH, and LQCS…QRVH.

It belongs to the krueppel C2H2-type zinc-finger protein family.

Its subcellular location is the nucleus. Its function is as follows. May be involved in transcriptional regulation. This chain is Gastrula zinc finger protein XlCGF51.1A, found in Xenopus laevis (African clawed frog).